A 214-amino-acid polypeptide reads, in one-letter code: MKVLVTGFEPFGGEKGNPALEAIKGLPAEIHGAEVRWLEVPTVFHKSAQVLEEEMNRYQPDFVLCIGQAGGRTSLTPERVTINQDDACISDNEDNQPIDRPIRPDGASAYFSSLPIKAMVQAIKKEGLPASVSNTAGTFVCSHLMYQALYLVEKKSPYVKAGFMHIPYMMEQVVNRPTTPAMSLVDIRRGIEAAIGAIIEHGDQELKLVGGETH.

Active-site residues include E78, C141, and H165.

The protein belongs to the peptidase C15 family. As to quaternary structure, homotetramer.

Its subcellular location is the cytoplasm. It carries out the reaction Release of an N-terminal pyroglutamyl group from a polypeptide, the second amino acid generally not being Pro.. In terms of biological role, removes 5-oxoproline from various penultimate amino acid residues except L-proline. This is Pyrrolidone-carboxylate peptidase 2 from Streptococcus pneumoniae serotype 4 (strain ATCC BAA-334 / TIGR4).